The chain runs to 363 residues: Serpentine receptor class T-55 (363 aa).

The signal sequence occupies residues 1-18 (MKLRHFLIFLMLIPISSS). Helical transmembrane passes span 70–90 (IYYI…IWVF), 107–127 (VFIG…PGFV), 143–163 (IVGK…AFLG), 187–207 (WLTV…TVLF), 231–251 (FLYF…ACLC), 278–298 (ICIS…FVLP), and 303–323 (FFHV…IMYI).

The protein belongs to the nematode receptor-like protein srt family.

Its subcellular location is the membrane. This chain is Serpentine receptor class T-55 (srt-55), found in Caenorhabditis elegans.